Consider the following 221-residue polypeptide: Adenylate kinase (221 aa).

Residue 10–15 participates in ATP binding; the sequence is GAGKGT. The tract at residues 30 to 59 is NMP; the sequence is STGDMLRAAVKAGTPLGIEAKKVMDAGGLV. AMP is bound by residues Thr-31, Arg-36, 57 to 59, 85 to 88, and Gln-92; these read GLV and GFPR. The segment at 122-159 is LID; sequence GRRVHVASGRTYHVKFNPPKADMVDDETGEALIQRDDD. ATP contacts are provided by residues Arg-123 and 132-133; that span reads TY. The AMP site is built by Arg-156 and Arg-167. Gly-207 provides a ligand contact to ATP.

The protein belongs to the adenylate kinase family. As to quaternary structure, monomer.

The protein resides in the cytoplasm. The enzyme catalyses AMP + ATP = 2 ADP. The protein operates within purine metabolism; AMP biosynthesis via salvage pathway; AMP from ADP: step 1/1. Catalyzes the reversible transfer of the terminal phosphate group between ATP and AMP. Plays an important role in cellular energy homeostasis and in adenine nucleotide metabolism. The chain is Adenylate kinase from Cupriavidus metallidurans (strain ATCC 43123 / DSM 2839 / NBRC 102507 / CH34) (Ralstonia metallidurans).